The following is an 82-amino-acid chain: U-actitoxin-Avd3f (82 aa).

Positions 1-16 are cleaved as a signal peptide; the sequence is MVFLLCFFLVADVSYG. Residues 21–71 enclose the BPTI/Kunitz inhibitor domain; that stretch reads CLLPMDVGRCRASHPRYYYNSSSKRCEKFIYGGCRGNANNFHTLEECEKVC. 3 disulfides stabilise this stretch: Cys21-Cys71, Cys30-Cys54, and Cys46-Cys67. A propeptide spanning residues 75–82 is cleaved from the precursor; it reads SRDSPKEN.

It belongs to the venom Kunitz-type family. Sea anemone type 2 potassium channel toxin subfamily.

The protein localises to the secreted. The protein resides in the nematocyst. Functionally, dual-function toxin that inhibits both the serine protease trypsin (Kd=30 nM) and voltage-gated potassium channels Kv1.2/KCNA2 (IC(50)=2800 nM). The sequence is that of U-actitoxin-Avd3f from Anemonia viridis (Snakelocks anemone).